The primary structure comprises 398 residues: ATP-dependent RNA helicase eIF4A (398 aa).

The short motif at 25 to 53 (DSFDSMDLKPELLRGVYAYGFERPSAIQQ) is the Q motif element. Residues 56 to 226 (IKPIIAGHDV…TKFMRDPIRI (171 aa)) enclose the Helicase ATP-binding domain. 69–76 (AQSGTGKT) is an ATP binding site. Residues 174–177 (DEAD) carry the DEAD box motif. Positions 237 to 398 (GIKQFYIAVE…EMPMNVADLI (162 aa)) constitute a Helicase C-terminal domain.

Belongs to the DEAD box helicase family. eIF4A subfamily. In terms of assembly, component of the eIF4F complex, which composition varies with external and internal environmental conditions. It is composed of at least eIF4A, eIF4E and eIF4G.

The protein resides in the cytoplasm. The catalysed reaction is ATP + H2O = ADP + phosphate + H(+). Its function is as follows. ATP-dependent RNA helicase which is a subunit of the eIF4F complex involved in cap recognition and is required for mRNA binding to ribosome. In the current model of translation initiation, eIF4A unwinds RNA secondary structures in the 5'-UTR of mRNAs which is necessary to allow efficient binding of the small ribosomal subunit, and subsequent scanning for the initiator codon. This Aspergillus niger (strain ATCC MYA-4892 / CBS 513.88 / FGSC A1513) protein is ATP-dependent RNA helicase eIF4A (tif1).